The primary structure comprises 481 residues: Glutamyl-tRNA(Gln) amidotransferase subunit A (481 aa).

Active-site charge relay system residues include K79 and S154. Residues 136-157 form a disordered region; it reads SAFGATKNPRNPEHVPGGSSGG. S178 serves as the catalytic Acyl-ester intermediate.

This sequence belongs to the amidase family. GatA subfamily. As to quaternary structure, heterotrimer of A, B and C subunits.

It carries out the reaction L-glutamyl-tRNA(Gln) + L-glutamine + ATP + H2O = L-glutaminyl-tRNA(Gln) + L-glutamate + ADP + phosphate + H(+). In terms of biological role, allows the formation of correctly charged Gln-tRNA(Gln) through the transamidation of misacylated Glu-tRNA(Gln) in organisms which lack glutaminyl-tRNA synthetase. The reaction takes place in the presence of glutamine and ATP through an activated gamma-phospho-Glu-tRNA(Gln). This Lachnospira eligens (strain ATCC 27750 / DSM 3376 / VPI C15-48 / C15-B4) (Eubacterium eligens) protein is Glutamyl-tRNA(Gln) amidotransferase subunit A.